Here is a 294-residue protein sequence, read N- to C-terminus: N-acetylmuramic acid 6-phosphate etherase (294 aa).

The 164-residue stretch at 54–217 folds into the SIS domain; sequence TIHSFKSNGR…STASMIGVGK (164 aa). Catalysis depends on Glu82, which acts as the Proton donor. Glu113 is a catalytic residue.

The protein belongs to the GCKR-like family. MurNAc-6-P etherase subfamily. In terms of assembly, homodimer.

The enzyme catalyses N-acetyl-D-muramate 6-phosphate + H2O = N-acetyl-D-glucosamine 6-phosphate + (R)-lactate. It participates in amino-sugar metabolism; N-acetylmuramate degradation. Specifically catalyzes the cleavage of the D-lactyl ether substituent of MurNAc 6-phosphate, producing GlcNAc 6-phosphate and D-lactate. The polypeptide is N-acetylmuramic acid 6-phosphate etherase (Oceanobacillus iheyensis (strain DSM 14371 / CIP 107618 / JCM 11309 / KCTC 3954 / HTE831)).